We begin with the raw amino-acid sequence, 490 residues long: Bifunctional protein GlmU (490 aa).

The segment at 1–241 (MSSPGDTAVL…SALVAGVNNR (241 aa)) is pyrophosphorylase. UDP-N-acetyl-alpha-D-glucosamine-binding positions include 12 to 15 (LAAG), Lys26, Gln83, 88 to 89 (GT), 112 to 114 (SGD), Gly151, Glu166, Asn181, and Asn239. Asp114 provides a ligand contact to Mg(2+). Asn239 is a binding site for Mg(2+). Residues 242–262 (VQLAQLGAELNRRIVAAHQLA) form a linker region. An N-acetyltransferase region spans residues 263-490 (GVTVVDPATT…AGGRPAGEAE (228 aa)). Positions 344 and 362 each coordinate UDP-N-acetyl-alpha-D-glucosamine. Residue His374 is the Proton acceptor of the active site. UDP-N-acetyl-alpha-D-glucosamine contacts are provided by Tyr377 and Asn388. Acetyl-CoA contacts are provided by residues Ala391, 397-398 (NY), Ser416, and Ala434. Residues 462–490 (RRKRPGSAAARAAEAAEKAAGGRPAGEAE) form a disordered region. The span at 467–490 (GSAAARAAEAAEKAAGGRPAGEAE) shows a compositional bias: low complexity.

This sequence in the N-terminal section; belongs to the N-acetylglucosamine-1-phosphate uridyltransferase family. In the C-terminal section; belongs to the transferase hexapeptide repeat family. As to quaternary structure, homotrimer. The cofactor is Mg(2+).

The protein resides in the cytoplasm. It catalyses the reaction alpha-D-glucosamine 1-phosphate + acetyl-CoA = N-acetyl-alpha-D-glucosamine 1-phosphate + CoA + H(+). The enzyme catalyses N-acetyl-alpha-D-glucosamine 1-phosphate + UTP + H(+) = UDP-N-acetyl-alpha-D-glucosamine + diphosphate. It functions in the pathway nucleotide-sugar biosynthesis; UDP-N-acetyl-alpha-D-glucosamine biosynthesis; N-acetyl-alpha-D-glucosamine 1-phosphate from alpha-D-glucosamine 6-phosphate (route II): step 2/2. It participates in nucleotide-sugar biosynthesis; UDP-N-acetyl-alpha-D-glucosamine biosynthesis; UDP-N-acetyl-alpha-D-glucosamine from N-acetyl-alpha-D-glucosamine 1-phosphate: step 1/1. Its pathway is bacterial outer membrane biogenesis; LPS lipid A biosynthesis. In terms of biological role, catalyzes the last two sequential reactions in the de novo biosynthetic pathway for UDP-N-acetylglucosamine (UDP-GlcNAc). The C-terminal domain catalyzes the transfer of acetyl group from acetyl coenzyme A to glucosamine-1-phosphate (GlcN-1-P) to produce N-acetylglucosamine-1-phosphate (GlcNAc-1-P), which is converted into UDP-GlcNAc by the transfer of uridine 5-monophosphate (from uridine 5-triphosphate), a reaction catalyzed by the N-terminal domain. The sequence is that of Bifunctional protein GlmU from Mycobacterium avium (strain 104).